The chain runs to 179 residues: Large ribosomal subunit protein uL5 (179 aa).

This sequence belongs to the universal ribosomal protein uL5 family. Part of the 50S ribosomal subunit; part of the 5S rRNA/L5/L18/L25 subcomplex. Contacts the 5S rRNA and the P site tRNA. Forms a bridge to the 30S subunit in the 70S ribosome.

Functionally, this is one of the proteins that bind and probably mediate the attachment of the 5S RNA into the large ribosomal subunit, where it forms part of the central protuberance. In the 70S ribosome it contacts protein S13 of the 30S subunit (bridge B1b), connecting the 2 subunits; this bridge is implicated in subunit movement. Contacts the P site tRNA; the 5S rRNA and some of its associated proteins might help stabilize positioning of ribosome-bound tRNAs. This chain is Large ribosomal subunit protein uL5, found in Bordetella bronchiseptica (strain ATCC BAA-588 / NCTC 13252 / RB50) (Alcaligenes bronchisepticus).